The sequence spans 494 residues: NADPH:adrenodoxin oxidoreductase, mitochondrial (494 aa).

The transit peptide at 1–34 (MAPRCWHWWRWSAWSGLRPSPSRSTPTPGFCQKF) directs the protein to the mitochondrion. Positions 51, 72, 80, and 116 each coordinate FAD. NADP(+) contacts are provided by residues 187 to 190 (QGNV), 231 to 232 (RR), and Glu243. Ser313 is modified (phosphoserine). FAD-binding positions include Trp401 and 408–410 (GVI). Gly408 contacts NADP(+).

Belongs to the ferredoxin--NADP reductase type 1 family. In terms of assembly, monomer. Interacts directly with FDX1. Requires FAD as cofactor. Expressed in the adrenal, testis and ovary and to a lesser extent in the liver and kidney.

It is found in the mitochondrion inner membrane. It carries out the reaction 2 reduced [adrenodoxin] + NADP(+) + H(+) = 2 oxidized [adrenodoxin] + NADPH. The catalysed reaction is 2 reduced [2Fe-2S]-[ferredoxin] + NADP(+) + H(+) = 2 oxidized [2Fe-2S]-[ferredoxin] + NADPH. The protein operates within steroid metabolism; cholesterol metabolism. Serves as the first electron transfer protein in all the mitochondrial P450 systems including cholesterol side chain cleavage in all steroidogenic tissues, steroid 11-beta hydroxylation in the adrenal cortex, 25-OH-vitamin D3-24 hydroxylation in the kidney, and sterol C-27 hydroxylation in the liver. Also acts as a ferredoxin--NADP(+) reductase essential for coenzyme Q biosynthesis: together with FDX2, transfers the electrons required for the hydroxylation reaction performed by COQ6. The chain is NADPH:adrenodoxin oxidoreductase, mitochondrial (Fdxr) from Mus musculus (Mouse).